A 558-amino-acid polypeptide reads, in one-letter code: WW domain-containing adapter protein with coiled-coil (558 aa).

3 disordered regions span residues 1-129 (MVMY…WSEH), 159-244 (QRQK…SPAP), and 321-461 (VAQQ…APGR). A compositionally biased stretch (polar residues) spans 22–32 (QPYQTLKYSSK). Composition is skewed to basic and acidic residues over residues 33–46 (SHPD…RDSN) and 56–70 (RRSD…DNTG). A compositionally biased stretch (basic residues) spans 72-82 (GRAKAIHPHRG). Residues 99-116 (NHSSLHSSNSHSNPNKSS) are compositionally biased toward low complexity. The WW domain occupies 120–153 (FEPADDWSEHISSSGKKYYYNCRTEVSQWEKPKE). The segment covering 175–184 (PKDRDYRREA) has biased composition (basic and acidic residues). Polar residues predominate over residues 188 to 200 (TPASYSSTKSSIA). Residues 204-217 (PSSLTPSSSSAAVS) show a composition bias toward low complexity. Composition is skewed to polar residues over residues 223–234 (NSASSASGSTVP) and 321–378 (VAQQ…MTVK). Over residues 402–431 (SPRTLQRQSSQRSPSPGPNHMGSNSSSSSN) the composition is skewed to low complexity. The span at 432-443 (NGGGGGGQGPGV) shows a compositional bias: gly residues. Residues 529–555 (QATLREQRILFLRQQIKELEKLKNQNS) are a coiled coil.

The protein localises to the nucleus. Functionally, acts as a linker between gene transcription and histone H2B monoubiquitination at 'Lys-120' (H2BK120ub1). Positive regulator of amino acid starvation-induced autophagy. Positively regulates MTOR activity. May negatively regulate the ubiquitin proteasome pathway. This Danio rerio (Zebrafish) protein is WW domain-containing adapter protein with coiled-coil (waca).